The chain runs to 70 residues: MGSLWSKISQLFVDAFTEFLVSVVDIAIFLAILFGFTVAGWLLVFLLRVVCSALLRSRSAIHSPELSKVL.

G2 is lipidated: N-myristoyl glycine; by host. Residues 2–15 form an endoplasmic reticulum retention signal region; it reads GSLWSKISQLFVDA. Residues 2–25 are Virion surface-facing; that stretch reads GSLWSKISQLFVDAFTEFLVSVVD. The chain crosses the membrane as a helical span at residues 26-46; that stretch reads IAIFLAILFGFTVAGWLLVFL. At 47 to 70 the chain is on the intravirion side; the sequence is LRVVCSALLRSRSAIHSPELSKVL.

This sequence belongs to the arteriviridae E protein family. Homooligomer. Associates with itself into higher-order structures, including dimers, trimers and tetramers. Associates with the GP2a-GP3-GP4 complex. In terms of processing, myristoylated. Post-translationally, not glycosylated.

Its subcellular location is the virion membrane. The protein localises to the host endoplasmic reticulum membrane. It localises to the host Golgi apparatus membrane. It is found in the secreted. Minor envelope protein. May function as a viroporin in the virion envelope that facilitates uncoating of the virus in order to release the genomic RNA into the cytoplasm for subsequent replication. This is Envelope small membrane protein (GP2b) from Sus scrofa (Pig).